Consider the following 583-residue polypeptide: Probable cysteine--tRNA ligase, mitochondrial (583 aa).

Cys-82 serves as a coordination point for Zn(2+). Gly-83 serves as a coordination point for L-cysteine. The 'HIGH' region signature appears at 84–94 (PTVYSSSHIGH). Thr-123 contacts L-cysteine. The 'KIIK' region signature appears at 128–131 (KIIN). Zn(2+) contacts are provided by Cys-271, His-296, and Glu-300. His-296 is a binding site for L-cysteine. The 'KMSKS' region motif lies at 337–341 (KMSKS). Lys-340 contributes to the ATP binding site.

This sequence belongs to the class-I aminoacyl-tRNA synthetase family. Zn(2+) serves as cofactor.

Its subcellular location is the mitochondrion. The enzyme catalyses tRNA(Cys) + L-cysteine + ATP = L-cysteinyl-tRNA(Cys) + AMP + diphosphate. Its function is as follows. Mitochondrial cysteine-specific aminoacyl-tRNA synthetase that catalyzes the ATP-dependent ligation of cysteine to tRNA(Cys). In terms of biological role, in addition to its role as an aminoacyl-tRNA synthetase, has also cysteine persulfide synthase activity. Produces reactive persulfide species such as cysteine persulfide (CysSSH) from substrate cysteine and mediate direct incorporation of CysSSH into proteins during translations, resulting in protein persulfides and polysulfides. CysSSHs behave as potent antioxidants and cellular protectants. The polypeptide is Probable cysteine--tRNA ligase, mitochondrial (mcysS) (Dictyostelium discoideum (Social amoeba)).